Consider the following 156-residue polypeptide: Myosin regulatory light chain B, smooth adductor muscle (156 aa).

A1 carries the blocked amino end (Ala) modification. EF-hand domains follow at residues 15–50 (KQIQEMKEAFTMIDQNRDGFIDINDLKEMFSSLGRT) and 84–119 (DTEETLRNAFAMFDELDTKKLNIEYIKDLLENMGDN). Positions 28, 30, 32, and 39 each coordinate Ca(2+).

In molluscan muscle, calcium regulation is associated with myosin rather than with actin. Muscle myosin contains two types of light chains: the catalytic light chain, essential for ATPase activity, and the regulatory light chain, a calcium-binding protein responsible for Ca(2+) dependent binding and Ca(2+) dependent Mg-ATPase activity. This Mizuhopecten yessoensis (Japanese scallop) protein is Myosin regulatory light chain B, smooth adductor muscle.